Here is a 431-residue protein sequence, read N- to C-terminus: Enolase (431 aa).

Q163 is a (2R)-2-phosphoglycerate binding site. The active-site Proton donor is E205. Positions 242, 288, and 315 each coordinate Mg(2+). Residues K340, R369, S370, and K391 each coordinate (2R)-2-phosphoglycerate. K340 acts as the Proton acceptor in catalysis.

The protein belongs to the enolase family. Requires Mg(2+) as cofactor.

It is found in the cytoplasm. It localises to the secreted. The protein localises to the cell surface. The catalysed reaction is (2R)-2-phosphoglycerate = phosphoenolpyruvate + H2O. Its pathway is carbohydrate degradation; glycolysis; pyruvate from D-glyceraldehyde 3-phosphate: step 4/5. Its function is as follows. Catalyzes the reversible conversion of 2-phosphoglycerate (2-PG) into phosphoenolpyruvate (PEP). It is essential for the degradation of carbohydrates via glycolysis. This chain is Enolase, found in Bacillus cereus (strain ZK / E33L).